The chain runs to 450 residues: Phosphoglucosamine mutase (450 aa).

The active-site Phosphoserine intermediate is S101. 4 residues coordinate Mg(2+): S101, D242, D244, and D246. S101 carries the post-translational modification Phosphoserine.

The protein belongs to the phosphohexose mutase family. Mg(2+) is required as a cofactor. Activated by phosphorylation.

The catalysed reaction is alpha-D-glucosamine 1-phosphate = D-glucosamine 6-phosphate. In terms of biological role, catalyzes the conversion of glucosamine-6-phosphate to glucosamine-1-phosphate. This is Phosphoglucosamine mutase from Rhodopseudomonas palustris (strain BisA53).